Here is a 273-residue protein sequence, read N- to C-terminus: Gamma-glutamyl cyclotransferase aclK (273 aa).

The protein belongs to the class-I pyridoxal-phosphate-dependent aminotransferase family.

The catalysed reaction is an alpha-(gamma-L-glutamyl)-L-amino acid = 5-oxo-L-proline + an L-alpha-amino acid. It participates in mycotoxin biosynthesis. Gamma-glutamyl cyclotransferase; part of the gene cluster that mediates the biosynthesis of aspirochlorine (or antibiotic A30641), an unusual halogenated spiro compound with distinctive antifungal properties due to selective inhibition of protein biosynthesis, and which is also active against bacteria, viruses, and murine tumor cells. The non-ribosomal peptide synthetase (NRPS) aclP is responsible the formation of the diketopiperazine (DKP) core from the condensation of 2 phenylalanine residues. One Phe residue is tailored into chlorotyrosine by hydroxylation and chlorination, whereas the second Phe undergoes an unprecedented C-C bond cleavage to be converted into glycine. After formation of the DKP, sulfur is incorporated into the DKP by conjugation with glutathione by aclG, followed by its stepwise degradation to the thiol by aclI, aclJ and aclK, and the dithiol oxidation by aclT. In addition, oxygenases (aclB, aclC, aclL and aclO) and O-methyltransferases (aclM and aclU) act as tailoring enzymes to produce the intermediate dechloroaspirochlorine. Ultimately, chlorination of dechloroaspirochlorine by the halogenase aclH is the last step in the aspirochlorine pathway. The sequence is that of Gamma-glutamyl cyclotransferase aclK from Aspergillus oryzae (strain ATCC 42149 / RIB 40) (Yellow koji mold).